The sequence spans 473 residues: MAGRQQELPTITPYLQETSPERAPSLPPKKKLRKNVQVPDRVPVLPPSPEVVPDSEEEEEEVVYTGFSHPGVQVVQKASGKRYVRRLEPKGVPPPSEENNEEEEPSTSKAVTSVVLNPQAEPLVSAWEKGMDLMIKLMEKYHVEAEEKNGFKFLPEQSNVYRKICQTWLNEEHRGLPLTFTSHKTFVEMMGRFLRAYVESYAGVKNNEWEPTGCAIWLHGCTEQEGVLRCYHGLEMIQKEQLVEMDVASENAQRALKEHPSRAKVVQNRWGRSVVQLKNDDARCCVEDVSCATNVFSAKSCGLFFSEGTKAQTAFLQIEAFMQAEYPKMQNGLKRLLMVMRCDCLYKPTGVPQLGRQMCKATPFALSNVDSLRAEEVTDKVALASIQYPCVLVYQCANPVYRNSRGGQGPNCDFKISAPDLLGALQLVRRLWGENVDGPLPKMLIPEFKWSSRLQYRNVALPASHGDGEKEPF.

Disordered regions lie at residues 1–69 and 85–111; these read MAGR…GFSH and RRLE…SKAV. Polar residues predominate over residues 7–18; sequence ELPTITPYLQET. Residues 53–62 show a composition bias toward acidic residues; it reads PDSEEEEEEV. The residue at position 141 (Tyr-141) is a Phosphotyrosine; by host. Residues Cys-230 and His-232 each coordinate Zn(2+). Residues 243 to 277 are flexible loop; sequence VEMDVASENAQRALKEHPSRAKVVQNRWGRSVVQL. Cys-285, Cys-301, Cys-342, Cys-344, Cys-396, and Cys-412 together coordinate Zn(2+). Residues 459 to 473 form a C-terminal arm, DBP binding region; that stretch reads VALPASHGDGEKEPF.

Belongs to the adenoviridae E2A DNA-binding protein family. Homomultimerizes on viral ssDNA bound to pTP. Forms a initiation complex with viral polymerase, pTP and hosts NFIA and POU2F1/OCT1. Interacts with host SRCAP.

It is found in the host nucleus. Functionally, plays a role in the elongation phase of viral strand displacement replication by unwinding the template in an ATP-independent fashion, employing its capacity to form multimers. Also enhances the rate of initiation. Released from template upon second strand synthesis. Assembles in complex with viral pTP, viral pol, host NFIA and host POU2F1/OCT1 on viral origin of replication. Covers the whole ssDNA genome during synthesis. The complementary strand synthesis induces its relese from DNA template. May inhibit cellular transcription mediated by the interaction between host SRCAP and CBP. The sequence is that of DNA-binding protein from Homo sapiens (Human).